The primary structure comprises 307 residues: UDP-N-acetylenolpyruvoylglucosamine reductase (307 aa).

Positions 33–197 (TGGNADFYIT…LEAAFTLAPG (165 aa)) constitute an FAD-binding PCMH-type domain. R176 is an active-site residue. The Proton donor role is filled by S226. E296 is an active-site residue.

It belongs to the MurB family. FAD serves as cofactor.

It localises to the cytoplasm. It carries out the reaction UDP-N-acetyl-alpha-D-muramate + NADP(+) = UDP-N-acetyl-3-O-(1-carboxyvinyl)-alpha-D-glucosamine + NADPH + H(+). Its pathway is cell wall biogenesis; peptidoglycan biosynthesis. Cell wall formation. This is UDP-N-acetylenolpyruvoylglucosamine reductase from Staphylococcus aureus (strain Mu3 / ATCC 700698).